Consider the following 94-residue polypeptide: Large ribosomal subunit protein uL23c (94 aa).

The protein belongs to the universal ribosomal protein uL23 family. Part of the 50S ribosomal subunit.

Its subcellular location is the plastid. It localises to the chloroplast. In terms of biological role, binds to 23S rRNA. This is Large ribosomal subunit protein uL23c (rpl23) from Tupiella akineta (Green alga).